A 97-amino-acid polypeptide reads, in one-letter code: MSNSRYSQTESNNDRKLEGLANKLATFRNINQEIGDRAVSDSSVINQMTDSLGSMFTDIKNSSSRLTRSLKAGNSIWRMVGLALLIFFILYTLFKLF.

Residues 1–74 (MSNSRYSQTE…RLTRSLKAGN (74 aa)) lie on the Cytoplasmic side of the membrane. The 63-residue stretch at 7–69 (SQTESNNDRK…KNSSSRLTRS (63 aa)) folds into the t-SNARE coiled-coil homology domain. The chain crosses the membrane as a helical; Anchor for type IV membrane protein span at residues 75-94 (SIWRMVGLALLIFFILYTLF). At 95–97 (KLF) the chain is on the lumenal side.

Component of a SNARE complex consisting of SED5, GOS1, YKT6 and SFT1.

Its subcellular location is the golgi apparatus membrane. Its function is as follows. Vesicle SNARE required for retrograde transport within the Golgi complex. The sequence is that of Protein transport protein SFT1 (SFT1) from Saccharomyces cerevisiae (strain ATCC 204508 / S288c) (Baker's yeast).